The chain runs to 420 residues: Adenylosuccinate synthetase (420 aa).

GTP contacts are provided by residues 12-18 (GDEGKGK) and 40-42 (GHT). Aspartate 13 (proton acceptor) is an active-site residue. Mg(2+) is bound by residues aspartate 13 and glycine 40. IMP is bound by residues 13-16 (DEGK), 38-41 (NAGH), threonine 128, arginine 142, glutamine 221, threonine 236, and arginine 299. Catalysis depends on histidine 41, which acts as the Proton donor. A substrate-binding site is contributed by 295–301 (ATTGRPR). Residues arginine 301, 327-329 (KAD), and 399-401 (SYG) each bind GTP.

Belongs to the adenylosuccinate synthetase family. As to quaternary structure, homodimer. Mg(2+) is required as a cofactor.

It localises to the cytoplasm. It carries out the reaction IMP + L-aspartate + GTP = N(6)-(1,2-dicarboxyethyl)-AMP + GDP + phosphate + 2 H(+). It functions in the pathway purine metabolism; AMP biosynthesis via de novo pathway; AMP from IMP: step 1/2. In terms of biological role, plays an important role in the de novo pathway of purine nucleotide biosynthesis. Catalyzes the first committed step in the biosynthesis of AMP from IMP. The polypeptide is Adenylosuccinate synthetase (Petrotoga mobilis (strain DSM 10674 / SJ95)).